A 209-amino-acid polypeptide reads, in one-letter code: dITP/XTP pyrophosphatase (209 aa).

7–12 (TGNKGK) serves as a coordination point for substrate. Residue aspartate 73 is the Proton acceptor of the active site. Aspartate 73 provides a ligand contact to Mg(2+). Substrate contacts are provided by residues serine 74, 155–158 (FGYD), lysine 178, and 183–184 (HR).

This sequence belongs to the HAM1 NTPase family. Homodimer. Requires Mg(2+) as cofactor.

It carries out the reaction XTP + H2O = XMP + diphosphate + H(+). The catalysed reaction is dITP + H2O = dIMP + diphosphate + H(+). It catalyses the reaction ITP + H2O = IMP + diphosphate + H(+). Pyrophosphatase that catalyzes the hydrolysis of nucleoside triphosphates to their monophosphate derivatives, with a high preference for the non-canonical purine nucleotides XTP (xanthosine triphosphate), dITP (deoxyinosine triphosphate) and ITP. Seems to function as a house-cleaning enzyme that removes non-canonical purine nucleotides from the nucleotide pool, thus preventing their incorporation into DNA/RNA and avoiding chromosomal lesions. The protein is dITP/XTP pyrophosphatase of Sulfurovum sp. (strain NBC37-1).